The sequence spans 599 residues: Endoribonuclease ZC3H12A (599 aa).

The tract at residues 1–40 (MSGPCGEKPVLEASPTMSLWEFEDSHSRQGTPRPGQELAA) is disordered. The segment at 42 to 87 (EASALELQMKVDFFRKLGYSSTEIHSVLQKLGVQADTNTVLGELVK) is ubiquitin association domain. The necessary for interaction with TANK stretch occupies residues 81-150 (VLGELVKHGT…DGSNVAMSHG (70 aa)). The tract at residues 90 to 133 (TATERERQTSPDPCPQLPLVPRGGGTPKAPNLEPPLPEEEKEGS) is disordered. Serine 99 is modified (phosphoserine). Positions 112-297 (GGGTPKAPNL…LDNFLRKKPL (186 aa)) are RNase. In terms of domain architecture, RNase NYN spans 135 to 290 (LRPVVIDGSN…LGRHGPSLDN (156 aa)). Residues 214–220 (RRVGGKR) are RNA binding. Residue aspartate 226 participates in Mg(2+) binding. Residues 301 to 324 (HRKQPCPYGRKCTYGIKCRFFHPE) form a C3H1-type zinc finger. Residues 301 to 457 (HRKQPCPYGR…SELWGVRGGG (157 aa)) are necessary for interaction with ZC3H12D. The segment at 343-420 (LSPPRAPSKD…SGSSFGPTDW (78 aa)) is disordered. Phosphoserine is present on serine 344. Residues 358 to 375 (PSPSSQSSSLLTESEQCS) show a composition bias toward low complexity. Residues 386–399 (SPGSRQEGLTQTYA) are compositionally biased toward polar residues. Phosphoserine occurs at positions 438 and 442. A disordered region spans residues 522-546 (PPPTSVLQEPPVQSPGAGRSPWGRA).

This sequence belongs to the ZC3H12 family. As to quaternary structure, oligomer. Found in a deubiquitination complex with TANK, USP10 and ZC3H12A; this complex inhibits genotoxic stress- or interleukin-1-beta-mediated NF-kappaB activation by promoting IKBKG or TRAF6 deubiquitination. Interacts with IKBKG; this interaction increases in response to DNA damage. Interacts with TANK; this interaction increases in response to DNA damage and serves as a bridge to anchor both TANK and USP10 into a deubiquitinating complex. Interacts with TRAF6; this interaction increases in response to DNA damage and is stimulated by TANK. Interacts with USP10; this interaction increases in response to DNA damage and serves as a bridge to anchor both TANK and USP10 into a deubiquitinating complex. Interacts with ZC3H12D. Interacts with TNRC6A. Interacts with IKBKB/IKKB. Interacts with IKBKB/IKKB. Interacts with BTRC; the interaction occurs when ZC3H12A is phosphorylated in a IKBKB/IKKB-dependent manner. Interacts with IRAK1; this interaction increases the interaction between ZC3H12A and IKBKB/IKKB. Interacts with UPF1; this interaction occurs in a mRNA translationally active- and termination-dependent manner and is essential for ZC3H12A-mediated degradation of target mRNAs. Associates with ribosomes. Interacts with ubiquitin. (Microbial infection) Oligomerization is necessary for antiviral activity. Mg(2+) is required as a cofactor. Post-translationally, phosphorylated by IRAK1; phosphorylation is necessary for subsequent phosphorylation by the I-kappa-B-kinase (IKK) complex. Phosphorylated by I-kappa-B-kinase (IKK) subunits IKBKB/IKKB and CHUK/IKKA at Ser-438 and Ser-442; these phosphorylations promote ubiquitin proteasome-mediated degradation of ZC3H12A and hence facilitates rapid and robust production of IL-6 mRNA in response to toll-like receptor (TLR) or IL-1 receptor stimuli. (Microbial infection) Rapidly degraded in activated T-cells in response to phorbol 13-acetate 12-myristate (PMA) during HIV-1 viral infection. In terms of processing, ubiquitinated; ubiquitination is induced in response to interleukin IL1 receptor stimuli in a IKBKB/IKKB and IRAK1-dependent manner, leading to proteasome-mediated degradation. Post-translationally, proteolytically cleaved between Arg-111 and Arg-214 by MALT1 in activated T-cells; cleavage at Arg-111 is critical for promoting ZC3H12A degradation in response to T-cell receptor (TCR) stimulation, and hence is necessary for prolonging the stability of a set of mRNAs controlling T-cell activation and Th17 cell differentiation. Expressed in heart, placenta, spleen, kidney, liver and lung. Expressed in leukocytes. Expressed in monocyte.

The protein localises to the nucleus. Its subcellular location is the cytoplasm. It is found in the P-body. The protein resides in the rough endoplasmic reticulum membrane. It localises to the cytoplasmic granule. Endoribonuclease involved in various biological functions such as cellular inflammatory response and immune homeostasis, glial differentiation of neuroprogenitor cells, cell death of cardiomyocytes, adipogenesis and angiogenesis. Functions as an endoribonuclease involved in mRNA decay. Modulates the inflammatory response by promoting the degradation of a set of translationally active cytokine-induced inflammation-related mRNAs, such as IL6 and IL12B, during the early phase of inflammation. Prevents aberrant T-cell-mediated immune reaction by degradation of multiple mRNAs controlling T-cell activation, such as those encoding cytokines (IL6 and IL2), cell surface receptors (ICOS, TNFRSF4 and TNFR2) and transcription factor (REL). Inhibits cooperatively with ZC3H12A the differentiation of helper T cells Th17 in lungs. They repress target mRNA encoding the Th17 cell-promoting factors IL6, ICOS, REL, IRF4, NFKBID and NFKBIZ. The cooperation requires RNA-binding by RC3H1 and the nuclease activity of ZC3H12A. Together with RC3H1, destabilizes TNFRSF4/OX40 mRNA by binding to the conserved stem loop structure in its 3'UTR. Self regulates by destabilizing its own mRNA. Cleaves mRNA harboring a stem-loop (SL), often located in their 3'-UTRs, during the early phase of inflammation in a helicase UPF1-dependent manner. Plays a role in the inhibition of microRNAs (miRNAs) biogenesis. Cleaves the terminal loop of a set of precursor miRNAs (pre-miRNAs) important for the regulation of the inflammatory response leading to their degradation, and thus preventing the biosynthesis of mature miRNAs. Also plays a role in promoting angiogenesis in response to inflammatory cytokines by inhibiting the production of antiangiogenic microRNAs via its anti-dicer RNase activity. Affects the overall ubiquitination of cellular proteins. Positively regulates deubiquitinase activity promoting the cleavage at 'Lys-48'- and 'Lys-63'-linked polyubiquitin chains on TNF receptor-associated factors (TRAFs), preventing JNK and NF-kappa-B signaling pathway activation, and hence negatively regulating macrophage-mediated inflammatory response and immune homeostasis. Also induces deubiquitination of the transcription factor HIF1A, probably leading to its stabilization and nuclear import, thereby positively regulating the expression of proangiogenic HIF1A-targeted genes. Involved in a TANK-dependent negative feedback response to attenuate NF-kappaB activation through the deubiquitination of IKBKG or TRAF6 in response to interleukin-1-beta (IL1B) stimulation or upon DNA damage. Prevents stress granule (SGs) formation and promotes macrophage apoptosis under stress conditions, including arsenite-induced oxidative stress, heat shock and energy deprivation. Plays a role in the regulation of macrophage polarization; promotes IL4-induced polarization of macrophages M1 into anti-inflammatory M2 state. May also act as a transcription factor that regulates the expression of multiple genes involved in inflammatory response, angiogenesis, adipogenesis and apoptosis. Functions as a positive regulator of glial differentiation of neuroprogenitor cells through an amyloid precursor protein (APP)-dependent signaling pathway. Attenuates septic myocardial contractile dysfunction in response to lipopolysaccharide (LPS) by reducing I-kappa-B-kinase (IKK)-mediated NF-kappa-B activation, and hence myocardial pro-inflammatory cytokine production. Functionally, (Microbial infection) Binds to Japanese encephalitis virus (JEV) and Dengue virus (DEN) RNAs. Its function is as follows. (Microbial infection) Exhibits antiviral activity against HIV-1 in lymphocytes by decreasing the abundance of HIV-1 viral RNA species. The sequence is that of Endoribonuclease ZC3H12A from Homo sapiens (Human).